Here is a 294-residue protein sequence, read N- to C-terminus: Peroxidase-like protein 3 (294 aa).

N-linked (GlcNAc...) asparagine glycosylation is present at Asn-129.

The protein belongs to the peroxidase family. As to expression, component of the acid-insoluble and acid-soluble organic matrix of calcified layers of the shell (at protein level).

It is found in the secreted. The chain is Peroxidase-like protein 3 from Lottia gigantea (Giant owl limpet).